The primary structure comprises 137 residues: Cytochrome b5 (137 aa).

Positions 6–82 (KKVYTLEEVA…MDEYYVGDID (77 aa)) constitute a Cytochrome b5 heme-binding domain. His41 and His65 together coordinate heme. A helical membrane pass occupies residues 108 to 128 (FIIKILQFLVPLAILGLAVAI).

It belongs to the cytochrome b5 family.

The protein localises to the endoplasmic reticulum membrane. It is found in the microsome membrane. In terms of biological role, membrane bound hemoprotein which function as an electron carrier for several membrane bound oxygenases. In Oryza sativa subsp. japonica (Rice), this protein is Cytochrome b5.